The chain runs to 262 residues: Probable lipoprotein EnvF (262 aa).

The N-terminal stretch at 1 to 25 (MNKIHVTYKNLLLPITFIAATLISA) is a signal peptide. C26 is lipidated: N-palmitoyl cysteine. C26 is lipidated: S-diacylglycerol cysteine. The tract at residues 227-262 (EAEKAQQLVEQSRKDIESQRKKAAGKMNEIQQTFKK) is disordered. Residues 237–246 (QSRKDIESQR) are compositionally biased toward basic and acidic residues.

The protein resides in the cell membrane. This is Probable lipoprotein EnvF (envF) from Salmonella typhimurium (strain LT2 / SGSC1412 / ATCC 700720).